Reading from the N-terminus, the 174-residue chain is uncharacterized protein (174 aa).

It belongs to the NAD(P)H dehydrogenase (quinone) family.

This is an uncharacterized protein from Bacillus subtilis (strain 168).